Consider the following 66-residue polypeptide: Large ribosomal subunit protein bL35 (66 aa).

The protein belongs to the bacterial ribosomal protein bL35 family.

This is Large ribosomal subunit protein bL35 from Brucella canis (strain ATCC 23365 / NCTC 10854 / RM-666).